The chain runs to 235 residues: Small ribosomal subunit protein eS4 (235 aa).

Positions 37–110 constitute an S4 RNA-binding domain; that stretch reads LPLGLIIRDV…KGRLVLYKLN (74 aa).

The protein belongs to the eukaryotic ribosomal protein eS4 family.

The polypeptide is Small ribosomal subunit protein eS4 (Methanosarcina mazei (strain ATCC BAA-159 / DSM 3647 / Goe1 / Go1 / JCM 11833 / OCM 88) (Methanosarcina frisia)).